A 399-amino-acid polypeptide reads, in one-letter code: Endo-1,4-beta-xylanase C (399 aa).

The first 20 residues, 1-20, serve as a signal peptide directing secretion; that stretch reads MFKFSASLAALAALVPFVAA. Residues 21–56 enclose the CBM1 domain; that stretch reads QSPEWGQCGGIGWTGPTTCVAGTTCVESNPYYSQCL. In terms of domain architecture, GH10 spans 81–396; the sequence is SAKLHTLAKA…KPAFNGIAAG (316 aa). The active-site Proton donor is the Glu212. Catalysis depends on Glu318, which acts as the Nucleophile. A disulfide bridge connects residues Cys346 and Cys352.

The protein belongs to the glycosyl hydrolase 10 (cellulase F) family.

Its subcellular location is the secreted. It carries out the reaction Endohydrolysis of (1-&gt;4)-beta-D-xylosidic linkages in xylans.. It functions in the pathway glycan degradation; xylan degradation. Endo-1,4-beta-xylanase involved in the hydrolysis of xylan, a major structural heterogeneous polysaccharide found in plant biomass representing the second most abundant polysaccharide in the biosphere, after cellulose. The chain is Endo-1,4-beta-xylanase C (xynC) from Phanerodontia chrysosporium (White-rot fungus).